A 105-amino-acid chain; its full sequence is Small ribosomal subunit protein uS10 (105 aa).

This sequence belongs to the universal ribosomal protein uS10 family. In terms of assembly, part of the 30S ribosomal subunit.

Functionally, involved in the binding of tRNA to the ribosomes. This chain is Small ribosomal subunit protein uS10, found in Roseobacter denitrificans (strain ATCC 33942 / OCh 114) (Erythrobacter sp. (strain OCh 114)).